Here is a 383-residue protein sequence, read N- to C-terminus: Putative protein FAM157A (383 aa).

Disordered stretches follow at residues 1–21 (MGPL…PLPK) and 177–254 (ATAR…PLGR).

The protein belongs to the FAM157 family.

The polypeptide is Putative protein FAM157A (FAM157A) (Homo sapiens (Human)).